We begin with the raw amino-acid sequence, 275 residues long: uncharacterized protein (275 aa).

2 disordered regions span residues 1–25 (MIGGERVLLGSQKREPSNEEDDQEQ) and 185–275 (QRGE…RHHM). Residues 228–239 (KPGDGEENAKDD) are compositionally biased toward basic and acidic residues.

This is an uncharacterized protein from Neurospora crassa (strain ATCC 24698 / 74-OR23-1A / CBS 708.71 / DSM 1257 / FGSC 987).